The sequence spans 644 residues: MFQDNPLLAQLKQQLHSQTPRAEGVVKATEKGFGFLEVDAQKSYFIPPPQMKKVMHGDRIIAVIHSEKERESAEPEELVEPFLTRFVGKVQGKNDRLAIVPDHPLLKDAIPCRAARGLNHEFKEGDWAVAEMRRHPLKGDRSFYAELTQYITFGDDHFVPWWVTLARHNLEKEAPDGVATEMLDEGLVREDLTALDFVTIDSASTEDMDDALFAKALPDGKLQLIVAIADPTAWIAEGSKLDKAAKIRAFTNYLPGFNIPMLPRELSDDLCSLRANEVRPVLACRMTLSTDGTIEDNIEFFAATIESKAKLVYDQVSDWLENTGDWQPESEAIAEQVRLLAQICQRRGEWRHNHALVFKDRPDYRFILGEKGEVLDIVAEPRRIANRIVEEAMIAANICAARVLRDKLGFGIYNVHMGFDPANADALAALLKTHGLHVDAEEVLTLDGFCKLRRELDAQPTGFLDSRIRRFQSFAEISTEPGPHFGLGLEAYATWTSPIRKYGDMINHRLLKAVIKGETATRPQDEITVQMAERRRLNRIAERDVGDWLYARFLKDKAGTDTRFAAEIVDISRGGMRVRLVDNGAIAFIPAPFLHAVRDELVCSQENGTVQIKGETAYKVTDVIDVTIAEVRMETRSIIARPVA.

The RNB domain occupies 189–516; it reads REDLTALDFV…NHRLLKAVIK (328 aa). An S1 motif domain is found at 561–643; sequence DTRFAAEIVD…ETRSIIARPV (83 aa).

This sequence belongs to the RNR ribonuclease family. RNase II subfamily.

It is found in the cytoplasm. The catalysed reaction is Exonucleolytic cleavage in the 3'- to 5'-direction to yield nucleoside 5'-phosphates.. Functionally, involved in mRNA degradation. Hydrolyzes single-stranded polyribonucleotides processively in the 3' to 5' direction. The chain is Exoribonuclease 2 from Escherichia coli O127:H6 (strain E2348/69 / EPEC).